We begin with the raw amino-acid sequence, 566 residues long: Intracellular exo-alpha-(1-&gt;5)-L-arabinofuranosidase (566 aa).

Positions 1 to 12 are enriched in polar residues; that stretch reads MTTHNSQYSAET. A disordered region spans residues 1–39; that stretch reads MTTHNSQYSAETTHPDKQESSPAPTAAGTTASNVSTTGN. Over residues 20–32 the composition is skewed to low complexity; the sequence is SSPAPTAAGTTAS. Alpha-L-arabinofuranose contacts are provided by glutamate 69, asparagine 114, and asparagine 214. Residue glutamate 215 is the Proton donor/acceptor of the active site. Alpha-L-arabinofuranose-binding residues include tyrosine 286, glutamate 340, and glutamine 409. Catalysis depends on glutamate 340, which acts as the Nucleophile.

Belongs to the glycosyl hydrolase 51 family. Homohexamer; trimer of dimers.

It localises to the cytoplasm. It catalyses the reaction Hydrolysis of terminal non-reducing alpha-L-arabinofuranoside residues in alpha-L-arabinosides.. It functions in the pathway glycan metabolism; L-arabinan degradation. With respect to regulation, completely inhibited by Hg(2+) and Cu(2+) ions, whereas 1 mM Zn(2+) inhibited activity by 51%. Functionally, involved in the degradation of arabinan and is a key enzyme in the complete degradation of the plant cell wall. Catalyzes the cleavage of terminal alpha-(1-&gt;5)-arabinofuranosyl bonds in different hemicellulosic homopolysaccharides (branched and debranched arabinans). It is active with sugar beet arabinan and wheat arabinoxylan. It also exhibited activity against alpha-(1-&gt;5)-linked arabinobiose, arabinotriose, arabinotetraose, and arabinopentaose. The polypeptide is Intracellular exo-alpha-(1-&gt;5)-L-arabinofuranosidase (abfB) (Bifidobacterium longum).